The chain runs to 550 residues: 2-succinyl-5-enolpyruvyl-6-hydroxy-3-cyclohexene-1-carboxylate synthase (550 aa).

It belongs to the TPP enzyme family. MenD subfamily. In terms of assembly, homodimer. Mg(2+) serves as cofactor. The cofactor is Mn(2+). It depends on thiamine diphosphate as a cofactor.

It carries out the reaction isochorismate + 2-oxoglutarate + H(+) = 5-enolpyruvoyl-6-hydroxy-2-succinyl-cyclohex-3-ene-1-carboxylate + CO2. It functions in the pathway quinol/quinone metabolism; 1,4-dihydroxy-2-naphthoate biosynthesis; 1,4-dihydroxy-2-naphthoate from chorismate: step 2/7. The protein operates within quinol/quinone metabolism; menaquinone biosynthesis. In terms of biological role, catalyzes the thiamine diphosphate-dependent decarboxylation of 2-oxoglutarate and the subsequent addition of the resulting succinic semialdehyde-thiamine pyrophosphate anion to isochorismate to yield 2-succinyl-5-enolpyruvyl-6-hydroxy-3-cyclohexene-1-carboxylate (SEPHCHC). This Flavobacterium psychrophilum (strain ATCC 49511 / DSM 21280 / CIP 103535 / JIP02/86) protein is 2-succinyl-5-enolpyruvyl-6-hydroxy-3-cyclohexene-1-carboxylate synthase.